Here is a 459-residue protein sequence, read N- to C-terminus: Transmembrane protein 143 (459 aa).

2 helical membrane passes run 280 to 300 (LLNLMLVVSGVAIFVNVGMVV) and 301 to 321 (LTDLKVATSLLLLLFAIFMGL). Ser332 carries the phosphoserine modification. Residues 435-459 (GFPKLDPVAPITSEPPQATPSSNIS) form a disordered region. Residues 448 to 459 (EPPQATPSSNIS) show a composition bias toward polar residues.

Its subcellular location is the membrane. The sequence is that of Transmembrane protein 143 (TMEM143) from Homo sapiens (Human).